Here is a 550-residue protein sequence, read N- to C-terminus: Chaperonin GroEL (550 aa).

Residues 30-33, Lys51, 87-91, Gly415, and Asp496 each bind ATP; these read TLGP and DGTTT.

Belongs to the chaperonin (HSP60) family. Forms a cylinder of 14 subunits composed of two heptameric rings stacked back-to-back. Interacts with the co-chaperonin GroES.

Its subcellular location is the cytoplasm. The catalysed reaction is ATP + H2O + a folded polypeptide = ADP + phosphate + an unfolded polypeptide.. Its function is as follows. Together with its co-chaperonin GroES, plays an essential role in assisting protein folding. The GroEL-GroES system forms a nano-cage that allows encapsulation of the non-native substrate proteins and provides a physical environment optimized to promote and accelerate protein folding. This chain is Chaperonin GroEL, found in Rickettsia bellii (strain OSU 85-389).